The following is a 287-amino-acid chain: ATP synthase gamma chain (287 aa).

This sequence belongs to the ATPase gamma chain family. In terms of assembly, F-type ATPases have 2 components, CF(1) - the catalytic core - and CF(0) - the membrane proton channel. CF(1) has five subunits: alpha(3), beta(3), gamma(1), delta(1), epsilon(1). CF(0) has three main subunits: a, b and c.

It is found in the cell inner membrane. In terms of biological role, produces ATP from ADP in the presence of a proton gradient across the membrane. The gamma chain is believed to be important in regulating ATPase activity and the flow of protons through the CF(0) complex. In Xanthomonas campestris pv. campestris (strain B100), this protein is ATP synthase gamma chain.